A 116-amino-acid chain; its full sequence is Iron-sulfur cluster insertion protein ErpA (116 aa).

C44, C108, and C110 together coordinate iron-sulfur cluster.

This sequence belongs to the HesB/IscA family. As to quaternary structure, homodimer. The cofactor is iron-sulfur cluster.

Required for insertion of 4Fe-4S clusters for at least IspG. The polypeptide is Iron-sulfur cluster insertion protein ErpA (Shewanella amazonensis (strain ATCC BAA-1098 / SB2B)).